A 308-amino-acid chain; its full sequence is S-adenosylmethionine-dependent nucleotide dehydratase (308 aa).

Residues 7-253 form the Radical SAM core domain; it reads SIQELVINFH…WQSYLMINPE (247 aa). Positions 21, 25, and 28 each coordinate [4Fe-4S] cluster.

Belongs to the radical SAM superfamily. Viperin family. [4Fe-4S] cluster serves as cofactor.

It catalyses the reaction CTP + AH2 + S-adenosyl-L-methionine = 3'-deoxy-3',4'-didehydro-CTP + 5'-deoxyadenosine + L-methionine + A + H2O + H(+). The enzyme catalyses GTP + AH2 + S-adenosyl-L-methionine = 3'-deoxy-3',4'-didehydro-GTP + 5'-deoxyadenosine + L-methionine + A + H2O + H(+). The catalysed reaction is UTP + AH2 + S-adenosyl-L-methionine = 3'-deoxy-3',4'-didehydro-UTP + 5'-deoxyadenosine + L-methionine + A + H2O + H(+). Its function is as follows. Expression of pVip58 in E.coli (strain MG1655) confers resistance to phages lambda, P1 and T7; delays culture collapse upon infection with T7. Catalyzes the conversion of cytidine triphosphate (CTP) to 3'-deoxy-3',4'-didehydro-CTP (ddhCTP), guanosine triphosphate (GTP) to 3'-deoxy-3',4'-didehydro-GTP (ddhGTP) and uridine triphosphate (UTP) to 3'-deoxy-3',4'-didehydro-UTP (ddhUTP), probably via a SAM-dependent radical mechanism. The modified nucleotide represses transcription from T7 RNA polymerase-directed genes (possibly by acting as chain terminators), strongly suggesting these nucleotides block viral polymerase transcription. The polypeptide is S-adenosylmethionine-dependent nucleotide dehydratase (Pseudoalteromonas ulvae).